The chain runs to 514 residues: Peptide chain release factor 3 (514 aa).

Positions 8–268 constitute a tr-type G domain; the sequence is KKRRTFAIIS…IFLKFAPEPH (261 aa). Residues 17 to 24, 85 to 89, and 139 to 142 each bind GTP; these read SHPDAGKT, DTPGH, and NKLD.

It belongs to the TRAFAC class translation factor GTPase superfamily. Classic translation factor GTPase family. PrfC subfamily.

It is found in the cytoplasm. In terms of biological role, increases the formation of ribosomal termination complexes and stimulates activities of RF-1 and RF-2. It binds guanine nucleotides and has strong preference for UGA stop codons. It may interact directly with the ribosome. The stimulation of RF-1 and RF-2 is significantly reduced by GTP and GDP, but not by GMP. In Streptococcus pneumoniae (strain CGSP14), this protein is Peptide chain release factor 3.